The primary structure comprises 328 residues: Nickel import system permease protein NikB (328 aa).

6 helical membrane passes run 11 to 31, 104 to 124, 139 to 159, 170 to 190, 229 to 249, and 279 to 299; these read LMQM…LMKL, LLIS…LGII, VIST…LLFI, ILSQ…AYII, ILPI…GTVV, and VLFI…LTLL. Positions 100–297 constitute an ABC transmembrane type-1 domain; it reads APITLLISFS…IINTIADLLT (198 aa).

This sequence belongs to the binding-protein-dependent transport system permease family. OppBC subfamily. In terms of assembly, the complex is composed of two ATP-binding proteins (NikD and NikE), two transmembrane proteins (NikB and NikC) and a solute-binding protein (NikA).

The protein localises to the cell membrane. Functionally, part of the ABC transporter complex NikABCDE (Opp2) involved in nickel import. Probably responsible for the translocation of the substrate across the membrane. This chain is Nickel import system permease protein NikB, found in Staphylococcus aureus (strain MSSA476).